The following is a 157-amino-acid chain: Probable succinate transporter subunit YjjB (157 aa).

Helical transmembrane passes span 8–28, 50–70, 87–107, and 129–149; these read LALAQDMILAAIPAVGFAMVF, MILMTSGLNIEWSTFMASMLV, VFTVAAVIPMFPGISAYTAMI, and FLTASSIVGALSIGLSIPGLW.

The protein belongs to the ThrE exporter (TC 2.A.79) family. The transporter is composed of YjjB and YjjP.

The protein localises to the cell inner membrane. Functionally, involved in succinate export with YjjP. Both proteins are required for export. This chain is Probable succinate transporter subunit YjjB, found in Shigella flexneri serotype 5b (strain 8401).